The following is a 70-amino-acid chain: uncharacterized protein (70 aa).

The protein resides in the plastid. This is an uncharacterized protein from Euglena longa (Euglenophycean alga).